The chain runs to 455 residues: Golgi pH regulator (455 aa).

5 helical membrane-spanning segments follow: residues Ile5 to Phe25, Val46 to Leu66, Leu79 to Val99, Cys114 to Leu134, and Val150 to Pro170. N-linked (GlcNAc...) asparagine glycosylation is found at Asn180 and Asn243. Helical transmembrane passes span Gly290–Leu310, Ile343–Leu363, Val378–Ile398, and Trp425–His445.

Belongs to the Golgi pH regulator (TC 1.A.38) family. In terms of assembly, homotrimer. Interacts with RABL3; the interaction stabilizes GPR89B.

It localises to the golgi apparatus membrane. The enzyme catalyses iodide(out) = iodide(in). It carries out the reaction chloride(in) = chloride(out). The catalysed reaction is bromide(in) = bromide(out). It catalyses the reaction fluoride(in) = fluoride(out). Functionally, voltage-gated channel that enables the transfer of anions such as iodide, chloride, bromide and fluoride which may function in counter-ion conductance and participates in Golgi acidification. Plays a role in lymphocyte development, probably by acting as a RABL3 effector in hematopoietic cells. In Cricetulus griseus (Chinese hamster), this protein is Golgi pH regulator.